Consider the following 436-residue polypeptide: Acetyl-CoA decarbonylase/synthase complex subunit delta 1 (436 aa).

This sequence belongs to the CdhD family. In terms of assembly, heterodimer of delta and gamma chains. The ACDS complex is made up of alpha, epsilon, beta, gamma and delta chains with a probable stoichiometry of (alpha(2)epsilon(2))(4)-beta(8)-(gamma(1)delta(1))(8) (Potential).

The protein operates within one-carbon metabolism; methanogenesis from acetate. In terms of biological role, part of a complex that catalyzes the reversible cleavage of acetyl-CoA, allowing growth on acetate as sole source of carbon and energy. Probably maintains the overall quaternary structure of the ACDS complex. The sequence is that of Acetyl-CoA decarbonylase/synthase complex subunit delta 1 (cdhD1) from Methanosarcina thermophila.